Here is a 291-residue protein sequence, read N- to C-terminus: ATP synthase gamma chain (291 aa).

The protein belongs to the ATPase gamma chain family. F-type ATPases have 2 components, CF(1) - the catalytic core - and CF(0) - the membrane proton channel. CF(1) has five subunits: alpha(3), beta(3), gamma(1), delta(1), epsilon(1). CF(0) has three main subunits: a, b and c.

It is found in the cell membrane. Functionally, produces ATP from ADP in the presence of a proton gradient across the membrane. The gamma chain is believed to be important in regulating ATPase activity and the flow of protons through the CF(0) complex. The polypeptide is ATP synthase gamma chain (Buchnera aphidicola subsp. Baizongia pistaciae (strain Bp)).